The primary structure comprises 715 residues: Polyribonucleotide nucleotidyltransferase (715 aa).

Residues aspartate 497 and aspartate 503 each coordinate Mg(2+). Positions 564–623 constitute a KH domain; it reads PRLLTMKIDPEQIGLVIGPGGKTIKSITEQTGSKIDIADDGTVTIAAIQAKKAERARDLI. The region spanning 633–701 is the S1 motif domain; the sequence is GEVYLGRVTR…NKGRLNLTRL (69 aa).

Belongs to the polyribonucleotide nucleotidyltransferase family. The cofactor is Mg(2+).

Its subcellular location is the cytoplasm. The enzyme catalyses RNA(n+1) + phosphate = RNA(n) + a ribonucleoside 5'-diphosphate. Involved in mRNA degradation. Catalyzes the phosphorolysis of single-stranded polyribonucleotides processively in the 3'- to 5'-direction. This chain is Polyribonucleotide nucleotidyltransferase, found in Crocosphaera subtropica (strain ATCC 51142 / BH68) (Cyanothece sp. (strain ATCC 51142)).